Reading from the N-terminus, the 829-residue chain is Periplasmic nitrate reductase (829 aa).

Positions 1–29 (MKMTRRAFVKANAAASAAAVAGVTLPATA) form a signal peptide, tat-type signal. A 4Fe-4S Mo/W bis-MGD-type domain is found at 41–97 (ITWDKAPCRFCGTGCSVLVGTQNGKVVATQGDPEAPVNKGLNCIKGYFLSKIMYGKD). Cysteine 48, cysteine 51, cysteine 55, and cysteine 83 together coordinate [4Fe-4S] cluster. Mo-bis(molybdopterin guanine dinucleotide)-binding positions include lysine 85, glutamine 152, asparagine 177, cysteine 181, 214 to 221 (WGSNMAEM), 245 to 249 (STYYH), 264 to 266 (QSD), methionine 374, glutamine 378, asparagine 484, 510 to 511 (SD), lysine 533, aspartate 560, and 718 to 727 (TGRVLEHWHT). Residue phenylalanine 794 coordinates substrate. Residues asparagine 802 and lysine 819 each coordinate Mo-bis(molybdopterin guanine dinucleotide).

Belongs to the prokaryotic molybdopterin-containing oxidoreductase family. NasA/NapA/NarB subfamily. Component of the periplasmic nitrate reductase NapAB complex composed of NapA and NapB. [4Fe-4S] cluster serves as cofactor. Mo-bis(molybdopterin guanine dinucleotide) is required as a cofactor. In terms of processing, predicted to be exported by the Tat system. The position of the signal peptide cleavage has not been experimentally proven.

It is found in the periplasm. The enzyme catalyses 2 Fe(II)-[cytochrome] + nitrate + 2 H(+) = 2 Fe(III)-[cytochrome] + nitrite + H2O. In terms of biological role, catalytic subunit of the periplasmic nitrate reductase complex NapAB. Receives electrons from NapB and catalyzes the reduction of nitrate to nitrite. The protein is Periplasmic nitrate reductase of Vibrio atlanticus (strain LGP32) (Vibrio splendidus (strain Mel32)).